Reading from the N-terminus, the 145-residue chain is 3-dehydroquinate dehydratase (145 aa).

Tyrosine 22 serves as the catalytic Proton acceptor. Residues asparagine 73, histidine 79, and aspartate 86 each coordinate substrate. The active-site Proton donor is histidine 99. Substrate contacts are provided by residues 100–101 (LS) and arginine 110.

Belongs to the type-II 3-dehydroquinase family. In terms of assembly, homododecamer.

It carries out the reaction 3-dehydroquinate = 3-dehydroshikimate + H2O. Its pathway is metabolic intermediate biosynthesis; chorismate biosynthesis; chorismate from D-erythrose 4-phosphate and phosphoenolpyruvate: step 3/7. Functionally, catalyzes a trans-dehydration via an enolate intermediate. This Prochlorococcus marinus (strain NATL1A) protein is 3-dehydroquinate dehydratase.